Here is a 236-residue protein sequence, read N- to C-terminus: Glyoxalase 3 (236 aa).

Catalysis depends on residues Cys136, His137, and Glu168. The residue at position 136 (Cys136) is a Cysteine sulfinic acid (-SO2H).

The protein belongs to the peptidase C56 family. HSP31-like subfamily. In terms of assembly, monomer.

The enzyme catalyses methylglyoxal + H2O = (R)-lactate + H(+). Its function is as follows. Catalyzes the conversion of methylglyoxal (MG) to D-lactate in a single glutathione (GSH)-independent step. Selective for MG, does not use glyoxal as substrate. Plays a role in detoxifying endogenously produced MG, particularly when glycerol is the principal carbon source. Important for viability in stationary phase. This Candida albicans (strain SC5314 / ATCC MYA-2876) (Yeast) protein is Glyoxalase 3.